A 395-amino-acid polypeptide reads, in one-letter code: Protochlorophyllide reductase B, chloroplastic (395 aa).

The N-terminal 59 residues, 1–59 (MALQAATSFLPSALSARKEGAAKDSAFFGVRLADGLKLDATSLGLRTKRVNTSSVAIRA), are a transit peptide targeting the chloroplast.

It belongs to the short-chain dehydrogenases/reductases (SDR) family. POR subfamily.

It localises to the plastid. The protein localises to the chloroplast. It carries out the reaction chlorophyllide a + NADP(+) = protochlorophyllide a + NADPH + H(+). Its pathway is porphyrin-containing compound metabolism; chlorophyll biosynthesis. Phototransformation of protochlorophyllide (Pchlide) to chlorophyllide (Chlide). The protein is Protochlorophyllide reductase B, chloroplastic (PORB) of Hordeum vulgare (Barley).